The following is a 289-amino-acid chain: ATP synthase gamma chain (289 aa).

It belongs to the ATPase gamma chain family. F-type ATPases have 2 components, CF(1) - the catalytic core - and CF(0) - the membrane proton channel. CF(1) has five subunits: alpha(3), beta(3), gamma(1), delta(1), epsilon(1). CF(0) has three main subunits: a, b and c.

It localises to the cell inner membrane. Functionally, produces ATP from ADP in the presence of a proton gradient across the membrane. The gamma chain is believed to be important in regulating ATPase activity and the flow of protons through the CF(0) complex. In Histophilus somni (strain 2336) (Haemophilus somnus), this protein is ATP synthase gamma chain.